We begin with the raw amino-acid sequence, 594 residues long: Aspartate--tRNA ligase (594 aa).

Glu171 provides a ligand contact to L-aspartate. Positions 195-198 (QLFK) are aspartate. An L-aspartate-binding site is contributed by Arg217. ATP is bound by residues 217–219 (RDE) and Gln226. Residue His449 participates in L-aspartate binding. Glu483 lines the ATP pocket. Position 490 (Arg490) interacts with L-aspartate. Residue 535–538 (GLDR) participates in ATP binding.

It belongs to the class-II aminoacyl-tRNA synthetase family. Type 1 subfamily. As to quaternary structure, homodimer.

The protein localises to the cytoplasm. The catalysed reaction is tRNA(Asp) + L-aspartate + ATP = L-aspartyl-tRNA(Asp) + AMP + diphosphate. Functionally, catalyzes the attachment of L-aspartate to tRNA(Asp) in a two-step reaction: L-aspartate is first activated by ATP to form Asp-AMP and then transferred to the acceptor end of tRNA(Asp). In Proteus mirabilis (strain HI4320), this protein is Aspartate--tRNA ligase.